A 44-amino-acid polypeptide reads, in one-letter code: Unknown protein 1 (44 aa).

In Lonomia obliqua (Moth), this protein is Unknown protein 1.